The sequence spans 69 residues: Iota-conotoxin LtIIIA (69 aa).

The N-terminal stretch at 1–20 is a signal peptide; that stretch reads MLKMGVLLFTFLVLFPLTTL. Positions 21–52 are excised as a propeptide; it reads ELDTDRPVERHAAIKQDLKPQERRGIRLHAPR. 2 positions are modified to 4-carboxyglutamate: Glu54 and Glu57. Intrachain disulfides connect Cys55/Cys67, Cys56/Cys65, and Cys61/Cys68. Pro58 carries the 4-hydroxyproline modification.

As to expression, expressed by the venom duct.

The protein resides in the secreted. Its function is as follows. Iota-conotoxins bind to voltage-gated sodium channels and act as agonists by shifting the voltage-dependence of activation to more hyperpolarized levels. This toxin enhances tetrodotoxin-sensitive sodium current in rat dorsal root ganglion neurons. The protein is Iota-conotoxin LtIIIA of Conus litteratus (Lettered cone).